A 1198-amino-acid polypeptide reads, in one-letter code: MPITQIISASDSEAGPKPSISLVPDKPSEPETSPRHHRLSRSLSKFKRWRGRSNSSLSMGSSEQQELQDSPNEARSDDDENGYNNDNADDLAKSKYMMKSIAGLLTTASVYAGMNNAQEMNVLSQVDSEESDSSDSFQENIGQNEVKSKKENLKTKSHPEVPRLDKRKPTLFDFSITREKLSKDNVAKLRQRFCLDEQEPFLNDFPAWLLKDVLVQGHIFITTKHFLFFAYLPKNPRSVKMSGNLNIRTKLIRSTRYWCVLKNHLFSMYTSSTELYFPVLTIDLREVQKIETQKHTLNGSATKTFKLYTDESTFKFNADSEFSAKSWVNALKKEQFAAQNSENNSISLKIPLPNIIEIDDQPIVNKALTLRLRALESSQTYAIDDFMFVFMDGSGSQVKESLGEQLAILQKSGVNTLYYDIPAKKSKSSFGKETPATAEQKNNGEDSKYLNVPTSAVPSSENGKKSRFRFRERSNSWFRRAKPLEDSQVEDVEEIYKDAANDIDSSVHSTIHIHEQEDSQEQTVAWKPSHLKNFAEMWAAKPIHYRNKFIPFQKDDTYLIKETEEVSANERFRYHFKFNKEKSLISTYYTYLNRNVPVYGKIYVSNDTVCFRSLLPGSNTYMVLPLVDVETCYKEKGFRFGYFVLVIVIHGHEELFFEFSTEVARDDIERILLKLLDNIYASSAEGSNISSASLGDVQHNPDSAKLKLFEDKINAEGFEVPLMIDENPHYKTSIKPNKSYKFGLLTIGSRGDVQPYIALGKGLIKEGHQVVIITHSEFRDFVESHGIQFEEIAGNPVELMSLMVENESMNVKMLREASSKFRGWIDALLQTSWEVCNRRKFDILIESPSAMVGIHIAEALQIPYFRAFTMPWTRTRAYPHAFIVPDQKRGGNYNYLTHVLFENVFWKGISGQVNKWRVETLGLGKTNLFLLQQNNVPFLYNVSPTIFPPSIDFSEWVRVTGYWFLDDKSTFKPPAELQEFISEARSKGKKLVYIGFGSIVVSNAKEMTEALVEAVMEADVYCILNKGWSERLGDKAAKKTEVDLPRNILNIGNVPHDWLFPQVDAAVHHGGSGTTGASLRAGLPTVIKPFFGDQFFYAGRVEDIGVGIALKKLNAQTLADALKVATTNKIMKDRAGLIKKKISKEDGIKTAISAIYNELEYARSVTLSRVKTPRKKEENVDATKLTPAETTDEGWTMI.

Residues 1–11 show a composition bias toward polar residues; the sequence is MPITQIISASD. 2 disordered regions span residues 1–89 and 124–162; these read MPIT…DNAD and SQVD…PEVP. Over residues 35 to 51 the composition is skewed to basic residues; that stretch reads RHHRLSRSLSKFKRWRG. Positions 52-67 are enriched in low complexity; the sequence is RSNSSLSMGSSEQQEL. Position 76 is a phosphoserine (S76). A compositionally biased stretch (basic and acidic residues) spans 146–162; sequence VKSKKENLKTKSHPEVP. Positions 187–236 constitute a GRAM 1 domain; sequence AKLRQRFCLDEQEPFLNDFPAWLLKDVLVQGHIFITTKHFLFFAYLPKNP. A PH domain is found at 238-336; that stretch reads SVKMSGNLNI…WVNALKKEQF (99 aa). The segment at 427-465 is disordered; that stretch reads KSSFGKETPATAEQKNNGEDSKYLNVPTSAVPSSENGKK. The span at 452-461 shows a compositional bias: polar residues; sequence VPTSAVPSSE. The region spanning 570-636 is the GRAM 2 domain; sequence ERFRYHFKFN…VDVETCYKEK (67 aa). S693 carries the phosphoserine modification. The UDP-alpha-D-glucose site is built by S749, R750, D752, N1025, N1053, V1054, H1056, H1069, S1072, G1073, T1074, D1093, and Q1094.

It belongs to the glycosyltransferase 28 family.

The protein resides in the cytoplasm. It is found in the membrane. It carries out the reaction a sterol + UDP-alpha-D-glucose = a sterol 3-beta-D-glucoside + UDP + H(+). It catalyses the reaction ergosterol + UDP-alpha-D-glucose = ergosteryl 3-beta-D-glucoside + UDP + H(+). Its function is as follows. Sterol glycosyltransferase responsible for the glycosylation of ergosterol to form ergosterol-glucoside. Also shows activity in vitro on other sterols such as cholesterol, beta-sitosterol, stigmasterol and tomatidine. In contrasts to what is observed in Pichia pastoris and Aspergillus oryzae, is not involved in cytoplasm to vacuole transport (Cvt), pexophagy or nonselective autophagy in Saccharomyces cerevisiae. In Saccharomyces cerevisiae (strain YJM789) (Baker's yeast), this protein is Sterol 3-beta-glucosyltransferase.